We begin with the raw amino-acid sequence, 104 residues long: Large ribosomal subunit protein bL21 (104 aa).

It belongs to the bacterial ribosomal protein bL21 family. As to quaternary structure, part of the 50S ribosomal subunit. Contacts protein L20.

This protein binds to 23S rRNA in the presence of protein L20. The sequence is that of Large ribosomal subunit protein bL21 from Tropheryma whipplei (strain Twist) (Whipple's bacillus).